The sequence spans 319 residues: uncharacterized protein (319 aa).

9 consecutive transmembrane segments (helical) span residues 11–31, 43–63, 83–103, 108–128, 134–154, 195–215, 220–240, 260–280, and 284–304; these read GLWAGFIAFVIAMLALDLGVF, ALGWSALWVSLALVFGAGVWW, LSVDNIFVFVVIFSALRIPAL, VLFWGILSALALRAIMIFAGV, FHWLIYVFGGFLIITGVKLFL, LATPLLMALLLVEASDILFAL, AIFAVTTDPFIVFTSNIFAIL, KVGLSAVLVFVGTKMAIIDFV, and PEVSLSVIAGLLGASIVASLI.

This sequence belongs to the TerC family.

Its subcellular location is the cell membrane. This is an uncharacterized protein from Myxococcus xanthus.